Reading from the N-terminus, the 442-residue chain is Circumsporozoite protein (442 aa).

Residues Met1–Ala18 form the signal peptide. Residues Ser69–Ser357 form a disordered region. A compositionally biased stretch (low complexity) spans Asp81–Asp94. A compositionally biased stretch (basic and acidic residues) spans Asn95 to Leu115. The tract at residues Lys114 to Lys121 is required for the binding to heparan sulfate proteoglycans (HSPGs) on the surface of host hepatocytes. The segment at Lys122–Pro126 is region I; contains the proteolytic cleavage site. Over residues Asn130–Asn318 the composition is skewed to low complexity. 46 consecutive repeat copies span residues Asn134–Pro137, Asn138–Pro141, Asn142–Pro145, Asn146–Pro149, Asn150–Pro153, Asn154–Pro157, Asn158–Pro161, Asn162–Pro165, Asn166–Pro169, Asn170–Pro173, Asn174–Pro177, Asn178–Pro181, Asn182–Pro185, Asn186–Pro189, Asn190–Pro193, Asn194–Pro197, Asn198–Pro201, Asn202–Pro205, Asn206–Pro209, Asn210–Pro213, Asn214–Pro217, Asn218–Pro221, Asn222–Pro225, Asn226–Pro229, Asn230–Pro233, Asn234–Pro237, Asn238–Pro241, Asn242–Pro245, Asn246–Pro249, Asn250–Pro253, Asn254–Pro257, Asn258–Pro261, Asn262–Pro265, Asn266–Pro269, Asn270–Pro273, Asn274–Pro277, Asn278–Pro281, Asn282–Pro285, Asn286–Pro289, Asn290–Pro293, Asn294–Pro297, Asn298–Pro301, Asn302–Pro305, Asn306–Pro309, Asn310–Pro313, and Asn314–Pro317. The tract at residues Asn134–Pro317 is 46 X 4 AA tandem repeats of N-[AV]-[ND]-P. Polar residues predominate over residues Lys319–Pro334. Residues Glu340 to Glu354 are compositionally biased toward low complexity. In terms of domain architecture, TSP type-1 spans Lys367 to Ser420. Disulfide bonds link Cys379–Cys414 and Cys383–Cys419. Thr382 is a glycosylation site (O-linked (Fuc) threonine). A lipid anchor (GPI-anchor amidated cysteine) is attached at Cys419. Positions Ser420 to Asn442 are cleaved as a propeptide — removed in mature form.

This sequence belongs to the plasmodium circumsporozoite protein family. In terms of processing, during host cell invasion, proteolytically cleaved at the cell membrane in the region I by a papain-like cysteine protease of parasite origin. Cleavage is triggered by the sporozoite contact with highly sulfated heparan sulfate proteoglycans (HSPGs) present on the host hepatocyte cell surface. Cleavage exposes the TSP type-1 (TSR) domain and is required for productive invasion of host hepatocytes but not for adhesion to the host cell membrane. Cleavage is dispensable for sporozoite development in the oocyst, motility and for traversal of host and vector cells. Post-translationally, O-glycosylated; maybe by POFUT2.

Its subcellular location is the cell membrane. It is found in the cytoplasm. Essential sporozoite protein. In the mosquito vector, required for sporozoite development in the oocyst, migration through the vector hemolymph and entry into the vector salivary glands. In the vertebrate host, required for sporozoite migration through the host dermis and infection of host hepatocytes. Binds to highly sulfated heparan sulfate proteoglycans (HSPGs) on the surface of host hepatocytes. In terms of biological role, in the vertebrate host, binds to highly sulfated heparan sulfate proteoglycans (HSPGs) on the surface of host hepatocytes and is required for sporozoite invasion of the host hepatocytes. This chain is Circumsporozoite protein, found in Plasmodium falciparum (isolate Wellcome).